The primary structure comprises 236 residues: Purine nucleoside phosphorylase DeoD-type (236 aa).

His5 serves as a coordination point for a purine D-ribonucleoside. Residues Gly21, Arg25, Arg44, and 88-91 (RVGS) contribute to the phosphate site. Residues 180-182 (DME) and 204-205 (SD) contribute to the a purine D-ribonucleoside site. Residue Asp205 is the Proton donor of the active site.

Belongs to the PNP/UDP phosphorylase family. As to quaternary structure, homohexamer; trimer of homodimers.

The catalysed reaction is a purine D-ribonucleoside + phosphate = a purine nucleobase + alpha-D-ribose 1-phosphate. It catalyses the reaction a purine 2'-deoxy-D-ribonucleoside + phosphate = a purine nucleobase + 2-deoxy-alpha-D-ribose 1-phosphate. Its function is as follows. Catalyzes the reversible phosphorolytic breakdown of the N-glycosidic bond in the beta-(deoxy)ribonucleoside molecules, with the formation of the corresponding free purine bases and pentose-1-phosphate. This Aliivibrio salmonicida (strain LFI1238) (Vibrio salmonicida (strain LFI1238)) protein is Purine nucleoside phosphorylase DeoD-type.